Here is a 192-residue protein sequence, read N- to C-terminus: ADP-ribosylation factor-like protein 14 (192 aa).

Gly2 is lipidated: N-myristoyl glycine. GTP contacts are provided by residues 20 to 27, 64 to 68, and 124 to 127; these read GLDSAGKS, DVGGQ, and NKQD.

This sequence belongs to the small GTPase superfamily. Arf family. As to quaternary structure, interacts with ARL14EP.

The protein localises to the cytoplasmic vesicle. GTPase that recruits MYO1E to MHC class II-containing vesicles via the effector protein ARL14EP and hence controls the movement of these vesicles along the actin cytoskeleton in dendritic cells. This Mus musculus (Mouse) protein is ADP-ribosylation factor-like protein 14 (Arl14).